A 272-amino-acid chain; its full sequence is MTATSSSESPDPNVDVCVSIQNATISYGDFEAVKNVYCDIPRGQVTAFIGPSGCGKSTILRALNRMNDLIEGCSLKGRILFDGADLYAPEVDPVEVRRRIGMVFQQPNPFPKSIYENIAFGARINGYNGDMDELVERSLRQAAIWDECKDKLNESGNSLSGGQQQRLCIARTIAIEPEVILMDEPCSALDPISTLKIEETIHELKKSFTIVIVTHNMQQAVRVSDMTAFFNAEAVDGESGKVGYLVEFNDTDKIFNAPSQQATQDYVSGRFG.

Residues V18 to A257 form the ABC transporter domain. G50–S57 contacts ATP.

The protein belongs to the ABC transporter superfamily. Phosphate importer (TC 3.A.1.7) family. As to quaternary structure, the complex is composed of two ATP-binding proteins (PstB), two transmembrane proteins (PstC and PstA) and a solute-binding protein (PstS).

It localises to the cell inner membrane. It catalyses the reaction phosphate(out) + ATP + H2O = ADP + 2 phosphate(in) + H(+). In terms of biological role, part of the ABC transporter complex PstSACB involved in phosphate import. Responsible for energy coupling to the transport system. The protein is Phosphate import ATP-binding protein PstB of Synechococcus sp. (strain CC9311).